A 76-amino-acid polypeptide reads, in one-letter code: RNA-binding protein KhpA (76 aa).

Residues 29–76 (SLHIELSVHPDDMGKVIGKQGRTAKALRSVVYAAATKQKRRVRLDIID) form the KH domain.

The protein belongs to the KhpA RNA-binding protein family. Forms a complex with KhpB.

It localises to the cytoplasm. Functionally, a probable RNA chaperone. Forms a complex with KhpB which binds to cellular RNA and controls its expression. Plays a role in peptidoglycan (PG) homeostasis and cell length regulation. The sequence is that of RNA-binding protein KhpA from Halalkalibacterium halodurans (strain ATCC BAA-125 / DSM 18197 / FERM 7344 / JCM 9153 / C-125) (Bacillus halodurans).